A 254-amino-acid chain; its full sequence is Low affinity immunoglobulin gamma Fc region receptor III-A (254 aa).

A signal peptide spans 1–20; the sequence is MWQLLLPTALLLLVSAGMRA. Ig-like C2-type domains follow at residues 24–105 and 107–189; these read PKAV…LEVH and GWLL…VNIT. 2 cysteine pairs are disulfide-bonded: cysteine 47–cysteine 89 and cysteine 128–cysteine 172. Asparagine 187 carries N-linked (GlcNAc...) asparagine glycosylation. The chain crosses the membrane as a helical span at residues 207–229; it reads YQVSFCLVMVLLFAVDTGLYFSV. Positions 234–254 are disordered; that stretch reads PSSTSDWKDHKFKWSKDPQDK. The segment covering 239-254 has biased composition (basic and acidic residues); the sequence is DWKDHKFKWSKDPQDK.

In terms of assembly, forms a heterooligomeric complex with ITAM-containing signaling subunits, either a homodimer of CD247, a homodimer of FCER1G or a heterodimer of CD247 and FCER1G, to form a functional receptor complex. Interacts (via transmembrane domain) with signaling subunits; this interaction is a prerequisite for receptor complex expression on the cell surface and intracellular signal transduction. Binds the Fc region of antigen-complexed IgG with a preference for IgG1 and IgG3 isotypes. Interacts with CD2; this interaction is involved in NK cell activation and cytotoxicity. Interacts with S100A4; this interaction inhibits PKC-dependent phosphorylation of FCGR3A. Post-translationally, glycosylated. Glycosylation plays an inhibitory role in the interaction with IgG1 and IgG2. In terms of processing, undergoes rapid ectodomain shedding upon NK cell stimulation. The soluble form is produced by a proteolytic cleavage mediated by ADAM17. Repeated stimulation causes receptor shedding, a mechanism that allows for increased NK cell motility and detachment from opsonized target cells while avoiding activation-induced NK cell apoptosis. As to expression, lymphocytes and monocytes.

The protein resides in the cell membrane. The protein localises to the secreted. Receptor for the invariable Fc fragment of immunoglobulin gamma (IgG). Optimally activated upon binding of clustered antigen-IgG complexes displayed on cell surfaces, triggers lysis of antibody-coated cells, a process known as antibody-dependent cellular cytotoxicity (ADCC). Does not bind free monomeric IgG, thus avoiding inappropriate effector cell activation in the absence of antigenic trigger. Mediates IgG effector functions on natural killer (NK) cells. Binds antigen-IgG complexes generated upon infection and triggers NK cell-dependent cytokine production and degranulation to limit viral load and propagation. Involved in the generation of memory-like adaptive NK cells capable to produce high amounts of IFNG and to efficiently eliminate virus-infected cells via ADCC. Regulates NK cell survival and proliferation, in particular by preventing NK cell progenitor apoptosis. Fc-binding subunit that associates with CD247 and/or FCER1G adapters to form functional signaling complexes. Following the engagement of antigen-IgG complexes, triggers phosphorylation of immunoreceptor tyrosine-based activation motif (ITAM)-containing adapters with subsequent activation of phosphatidylinositol 3-kinase signaling and sustained elevation of intracellular calcium that ultimately drive NK cell activation. The ITAM-dependent signaling coupled to receptor phosphorylation by PKC mediates robust intracellular calcium flux that leads to production of pro-inflammatory cytokines, whereas in the absence of receptor phosphorylation it mainly activates phosphatidylinositol 3-kinase signaling leading to cell degranulation. Costimulates NK cells and trigger lysis of target cells independently of IgG binding. Mediates the antitumor activities of therapeutic antibodies. Upon ligation on monocytes triggers TNFA-dependent ADCC of IgG-coated tumor cells. Mediates enhanced ADCC in response to afucosylated IgGs. The polypeptide is Low affinity immunoglobulin gamma Fc region receptor III-A (FCGR3A) (Papio anubis (Olive baboon)).